The chain runs to 494 residues: UDP-N-acetylmuramoyl-L-alanyl-D-glutamate--2,6-diaminopimelate ligase (494 aa).

UDP-N-acetyl-alpha-D-muramoyl-L-alanyl-D-glutamate is bound at residue serine 30. 110–116 lines the ATP pocket; sequence GTNGKTS. UDP-N-acetyl-alpha-D-muramoyl-L-alanyl-D-glutamate contacts are provided by residues 152–153, serine 179, and arginine 187; that span reads TT. Lysine 219 carries the N6-carboxylysine modification. Meso-2,6-diaminopimelate is bound by residues arginine 380, 404-407, glycine 456, and glutamate 460; that span reads DNPR. The Meso-diaminopimelate recognition motif motif lies at 404 to 407; the sequence is DNPR.

It belongs to the MurCDEF family. MurE subfamily. Requires Mg(2+) as cofactor. Carboxylation is probably crucial for Mg(2+) binding and, consequently, for the gamma-phosphate positioning of ATP.

The protein resides in the cytoplasm. The catalysed reaction is UDP-N-acetyl-alpha-D-muramoyl-L-alanyl-D-glutamate + meso-2,6-diaminopimelate + ATP = UDP-N-acetyl-alpha-D-muramoyl-L-alanyl-gamma-D-glutamyl-meso-2,6-diaminopimelate + ADP + phosphate + H(+). Its pathway is cell wall biogenesis; peptidoglycan biosynthesis. Catalyzes the addition of meso-diaminopimelic acid to the nucleotide precursor UDP-N-acetylmuramoyl-L-alanyl-D-glutamate (UMAG) in the biosynthesis of bacterial cell-wall peptidoglycan. In Alkaliphilus metalliredigens (strain QYMF), this protein is UDP-N-acetylmuramoyl-L-alanyl-D-glutamate--2,6-diaminopimelate ligase.